We begin with the raw amino-acid sequence, 534 residues long: Cytochrome c oxidase subunit 1 (534 aa).

Residues 1-14 (MVQRWLYSTNAKDI) lie on the Mitochondrial matrix side of the membrane. The helical transmembrane segment at 15 to 39 (AVLYFMLAIFSGMAGTAMSLIIRLE) threads the bilayer. Ca(2+) is bound by residues Glu39, Ala42, and Gly44. Over 40-54 (LAAPGSQYLHGNSQL) the chain is Mitochondrial intermembrane. The chain crosses the membrane as a helical span at residues 55 to 88 (FNVLVVGHAVLMIFFLVMPALIGGFGNYLLPLMI). His62 is a binding site for Fe(II)-heme a. At 89 to 97 (GATDTAFPR) the chain is on the mitochondrial matrix side. The helical transmembrane segment at 98–118 (INNIAFWVLPMGLVCLVTSTL) threads the bilayer. At 119-142 (VESGAGTGWTVYPPLSSIQAHSGP) the chain is on the mitochondrial intermembrane side. Residues 143–171 (SVDLAIFALHLTSISSLLGAINFIVTTLN) form a helical membrane-spanning segment. The Mitochondrial matrix segment spans residues 172-183 (MRTNGMTMHKLP). Residues 184–215 (LFVWSIFITAFLLLLSLPVLSAGITMLLLDRN) form a helical membrane-spanning segment. The Mitochondrial intermembrane portion of the chain corresponds to 216 to 228 (FNTSFFEVSGGGD). Residues 229–263 (PILYEHLFWFFGHPEVYILIIPGFGIISHVVSTYS) form a helical membrane-spanning segment. His241 serves as a coordination point for Cu cation. A cross-link (1'-histidyl-3'-tyrosine (His-Tyr)) is located at residues 241–245 (HPEVY). Residue Tyr245 participates in O2 binding. Topologically, residues 264 to 269 (KKPVFG) are mitochondrial matrix. Residues 270–295 (EISMVYAMASIGLLGFLVWSHHMYIV) traverse the membrane as a helical segment. Positions 290 and 291 each coordinate Cu cation. Residues 296 to 298 (GLD) are Mitochondrial intermembrane-facing. The helical transmembrane segment at 299–327 (ADTRAYFTSATMIIAIPTGIKIFSWLATI) threads the bilayer. Over 328-335 (HGGSIRLA) the chain is Mitochondrial matrix. A helical transmembrane segment spans residues 336-358 (TPMLYAIAFLFLFTMGGLTGVAL). Residues 359-370 (ANASLDVAFHDT) are Mitochondrial intermembrane-facing. Residues His368 and Asp369 each contribute to the Mg(2+) site. A helical transmembrane segment spans residues 371–400 (YYVVGHFHYVLSMGAIFSLFAGYYYWSPQI). A heme a3-binding site is contributed by His376. Fe(II)-heme a is bound at residue His378. At 401–406 (LGLNYN) the chain is on the mitochondrial matrix side. The chain crosses the membrane as a helical span at residues 407–431 (EKLAQIQFWLIFIGANVIFFPMHFL). Residues 432–449 (GINGMPRRIPDYPDAFAG) are Mitochondrial intermembrane-facing. Pro441 contacts Ca(2+). The helical transmembrane segment at 450-474 (WNYVASIGSFIATLSLFLFIYILYD) threads the bilayer. The Mitochondrial matrix segment spans residues 475–534 (QLVNGLNNKVNNKSVIYNKAPDFVESNTIFNLNTVKSSSIEFLLTSPPAVHSFNTPAVQS).

This sequence belongs to the heme-copper respiratory oxidase family. In terms of assembly, component of the cytochrome c oxidase (complex IV, CIV), a multisubunit enzyme composed of 12 subunits. The complex is composed of a catalytic core of 3 subunits COX1, COX2 and COX3, encoded in the mitochondrial DNA, and 9 supernumerary subunits COX4, COX5A (or COX5B), COX6, COX7, COX8, COX9, COX12, COX13 and COX26, which are encoded in the nuclear genome. The complex exists as a monomer or a dimer and forms supercomplexes (SCs) in the inner mitochondrial membrane with a dimer of ubiquinol-cytochrome c oxidoreductase (cytochrome b-c1 complex, complex III, CIII), resulting in 2 different assemblies (supercomplexes III(2)IV and III(2)IV(2)). The cofactor is heme. Requires Cu cation as cofactor. In terms of processing, the N-terminus is blocked.

The protein localises to the mitochondrion inner membrane. The enzyme catalyses 4 Fe(II)-[cytochrome c] + O2 + 8 H(+)(in) = 4 Fe(III)-[cytochrome c] + 2 H2O + 4 H(+)(out). Its pathway is energy metabolism; oxidative phosphorylation. Functionally, component of the cytochrome c oxidase, the last enzyme in the mitochondrial electron transport chain which drives oxidative phosphorylation. The respiratory chain contains 3 multisubunit complexes succinate dehydrogenase (complex II, CII), ubiquinol-cytochrome c oxidoreductase (cytochrome b-c1 complex, complex III, CIII) and cytochrome c oxidase (complex IV, CIV), that cooperate to transfer electrons derived from NADH and succinate to molecular oxygen, creating an electrochemical gradient over the inner membrane that drives transmembrane transport and the ATP synthase. Cytochrome c oxidase is the component of the respiratory chain that catalyzes the reduction of oxygen to water. Electrons originating from reduced cytochrome c in the intermembrane space (IMS) are transferred via the dinuclear copper A center (CU(A)) of COX2 and heme A of COX1 to the active site in COX1, a binuclear center (BNC) formed by heme A3 and copper B (CU(B)). The BNC reduces molecular oxygen to 2 water molecules using 4 electrons from cytochrome c in the IMS and 4 protons from the mitochondrial matrix. COX1 is a catalytic core subunit containing heme A and the active site BNC with heme A3 and the copper atom CU(B). The chain is Cytochrome c oxidase subunit 1 (COX1) from Saccharomyces cerevisiae (strain ATCC 204508 / S288c) (Baker's yeast).